A 230-amino-acid chain; its full sequence is Uracil-DNA glycosylase (230 aa).

Catalysis depends on Asp70, which acts as the Proton acceptor.

The protein belongs to the uracil-DNA glycosylase (UDG) superfamily. UNG family.

Its subcellular location is the cytoplasm. It catalyses the reaction Hydrolyzes single-stranded DNA or mismatched double-stranded DNA and polynucleotides, releasing free uracil.. Its function is as follows. Excises uracil residues from the DNA which can arise as a result of misincorporation of dUMP residues by DNA polymerase or due to deamination of cytosine. In Pseudomonas fluorescens (strain SBW25), this protein is Uracil-DNA glycosylase.